Consider the following 65-residue polypeptide: Small ribosomal subunit protein bS21A (65 aa).

The protein belongs to the bacterial ribosomal protein bS21 family.

The protein is Small ribosomal subunit protein bS21A of Francisella tularensis subsp. holarctica (strain LVS).